A 597-amino-acid chain; its full sequence is Elongation factor 4 (597 aa).

In terms of domain architecture, tr-type G spans 2–184; that stretch reads DHIRNFSIIA…ALIAKVPPPK (183 aa). GTP-binding positions include 14 to 19 and 131 to 134; these read DHGKST and NKID.

The protein belongs to the TRAFAC class translation factor GTPase superfamily. Classic translation factor GTPase family. LepA subfamily.

Its subcellular location is the cell inner membrane. It carries out the reaction GTP + H2O = GDP + phosphate + H(+). Functionally, required for accurate and efficient protein synthesis under certain stress conditions. May act as a fidelity factor of the translation reaction, by catalyzing a one-codon backward translocation of tRNAs on improperly translocated ribosomes. Back-translocation proceeds from a post-translocation (POST) complex to a pre-translocation (PRE) complex, thus giving elongation factor G a second chance to translocate the tRNAs correctly. Binds to ribosomes in a GTP-dependent manner. The sequence is that of Elongation factor 4 from Burkholderia vietnamiensis (strain G4 / LMG 22486) (Burkholderia cepacia (strain R1808)).